The chain runs to 96 residues: Putative pterin-4-alpha-carbinolamine dehydratase (96 aa).

The protein belongs to the pterin-4-alpha-carbinolamine dehydratase family.

It carries out the reaction (4aS,6R)-4a-hydroxy-L-erythro-5,6,7,8-tetrahydrobiopterin = (6R)-L-erythro-6,7-dihydrobiopterin + H2O. In Brucella anthropi (strain ATCC 49188 / DSM 6882 / CCUG 24695 / JCM 21032 / LMG 3331 / NBRC 15819 / NCTC 12168 / Alc 37) (Ochrobactrum anthropi), this protein is Putative pterin-4-alpha-carbinolamine dehydratase.